The chain runs to 238 residues: Ribonuclease PH (238 aa).

Phosphate is bound by residues arginine 86 and glycine 124–arginine 126.

Belongs to the RNase PH family. As to quaternary structure, homohexameric ring arranged as a trimer of dimers.

It carries out the reaction tRNA(n+1) + phosphate = tRNA(n) + a ribonucleoside 5'-diphosphate. Phosphorolytic 3'-5' exoribonuclease that plays an important role in tRNA 3'-end maturation. Removes nucleotide residues following the 3'-CCA terminus of tRNAs; can also add nucleotides to the ends of RNA molecules by using nucleoside diphosphates as substrates, but this may not be physiologically important. Probably plays a role in initiation of 16S rRNA degradation (leading to ribosome degradation) during starvation. The chain is Ribonuclease PH from Actinobacillus pleuropneumoniae serotype 5b (strain L20).